We begin with the raw amino-acid sequence, 641 residues long: Lipase (641 aa).

Positions 1-38 (MKETKHQHTFSIRKSAYGAASVMVASCIFVIGGGVAEA) are cleaved as a signal peptide. 2 disordered regions span residues 41–174 (STTQ…PSVD) and 206–246 (TVSP…KPTV). Residues 53–64 (QTSQQETHTHQT) show a composition bias toward low complexity. A compositionally biased stretch (basic and acidic residues) spans 73-94 (TPEHVDDSKEATPLPEKAESPK). Polar residues-rich tracts occupy residues 95-106 (TEVTVQPSSHTQ) and 127-139 (PEST…VESN). Basic and acidic residues predominate over residues 140–165 (KATENEMSPVEHHASNVEKREDRLET). Polar residues predominate over residues 227–239 (ENTTAQNKFTSQA). The active-site Nucleophile is the Ser-369. Gly-535 is a Ca(2+) binding site. Residue Asp-559 is the Charge relay system of the active site. Asp-599 serves as a coordination point for Ca(2+). His-600 (charge relay system) is an active-site residue. Ca(2+)-binding residues include Asp-602, Asp-607, and Asp-610.

The protein belongs to the AB hydrolase superfamily. Lipase family. It depends on Ca(2+) as a cofactor.

Its subcellular location is the secreted. The catalysed reaction is a triacylglycerol + H2O = a diacylglycerol + a fatty acid + H(+). The enzyme catalyses a 1,2-diacyl-sn-glycero-3-phosphocholine + H2O = a 2-acyl-sn-glycero-3-phosphocholine + a fatty acid + H(+). Has a broad substrate specificity hydrolyzing a variety of triglycerides and phosphatidylcholines. In Staphylococcus hyicus, this protein is Lipase (lip).